A 444-amino-acid chain; its full sequence is Biotin carboxylase 2 (444 aa).

Residues 1–444 enclose the Biotin carboxylation domain; it reads MFTKVLIANR…VTTDFLKQHL (444 aa). Residues lysine 116, lysine 158, 164–165, 200–203, histidine 208, and histidine 235 each bind ATP; these read GG and EKVI. Residues 120–317 form the ATP-grasp domain; that stretch reads RKAMEAAGVP…LVEQQLRIAA (198 aa). Lysine 237 is a binding site for hydrogencarbonate. Positions 275 and 288 each coordinate ATP. Glutamate 275, glutamate 288, and asparagine 290 together coordinate Mg(2+). Residues glutamate 275, glutamate 288, and asparagine 290 each coordinate Mn(2+). Residues arginine 292, valine 295, and arginine 338 each contribute to the hydrogencarbonate site. Arginine 292 is a catalytic residue. Arginine 338 is a biotin binding site.

In terms of assembly, acetyl-CoA carboxylase is a heterohexamer of biotin carboxyl carrier protein, biotin carboxylase and the two subunits of carboxyl transferase in a 2:2 complex. Requires Mg(2+) as cofactor. It depends on Mn(2+) as a cofactor.

The enzyme catalyses N(6)-biotinyl-L-lysyl-[protein] + hydrogencarbonate + ATP = N(6)-carboxybiotinyl-L-lysyl-[protein] + ADP + phosphate + H(+). It participates in lipid metabolism; malonyl-CoA biosynthesis; malonyl-CoA from acetyl-CoA: step 1/1. Functionally, this protein is a component of the acetyl coenzyme A carboxylase complex; first, biotin carboxylase catalyzes the carboxylation of the carrier protein and then the transcarboxylase transfers the carboxyl group to form malonyl-CoA. The polypeptide is Biotin carboxylase 2 (accC2) (Bacillus subtilis (strain 168)).